Reading from the N-terminus, the 360-residue chain is MRPAQALIDLDALRHNYRLARQLGGGKALAVVKADAYGHGAVRCAQALEPEADGFAVACIEEALELRQAGVRAPILLLEGFFEHDELALIAEHDLWTVVATPWQVRALAEFRSPRPLRVWLKLDSGMHRLGLSPEDFRAAWLHLRGLPQIDSLVLMTHLAQADELECSRTDEQAVAFALTCGGMRAETSLRNSPGLLGWPALRNDWSRPGLMLYGANPFPQPSELTAQLRPVMTVRSRIISVRDLPAGEPVGYGARFVAERPTRVGVVAMGYADGYPQFAPNGTPVLVDGKVCPLIGRVSMDMLTVDLTEHPHADVGTPVQLWGDAPQVSTLAAQCNVSAYQLLCGLKRVPRHYSTPAHA.

Residue Lys-33 is the Proton acceptor; specific for D-alanine of the active site. The residue at position 33 (Lys-33) is an N6-(pyridoxal phosphate)lysine. A substrate-binding site is contributed by Arg-129. The Proton acceptor; specific for L-alanine role is filled by Tyr-253. Position 301 (Met-301) interacts with substrate.

Belongs to the alanine racemase family. Requires pyridoxal 5'-phosphate as cofactor.

The catalysed reaction is L-alanine = D-alanine. Its pathway is amino-acid biosynthesis; D-alanine biosynthesis; D-alanine from L-alanine: step 1/1. Catalyzes the interconversion of L-alanine and D-alanine. May also act on other amino acids. The chain is Alanine racemase (alr) from Xanthomonas campestris pv. campestris (strain 8004).